Here is a 270-residue protein sequence, read N- to C-terminus: Non-homologous end joining protein Ku (270 aa).

A Ku domain is found at 10–194; it reads SLGLLNIGIK…NYPIQKQELT (185 aa).

This sequence belongs to the prokaryotic Ku family. Homodimer. Interacts with LigD.

In terms of biological role, with LigD forms a non-homologous end joining (NHEJ) DNA repair enzyme, which repairs dsDNA breaks with reduced fidelity. Binds linear dsDNA with 5'- and 3'- overhangs but not closed circular dsDNA nor ssDNA. Recruits and stimulates the ligase activity of LigD. This Bacillus thuringiensis subsp. konkukian (strain 97-27) protein is Non-homologous end joining protein Ku.